We begin with the raw amino-acid sequence, 51 residues long: Insulin (51 aa).

Disulfide bonds link cysteine 8/cysteine 37, cysteine 20/cysteine 50, and cysteine 36/cysteine 41.

The protein belongs to the insulin family. As to quaternary structure, heterodimer of a B chain and an A chain linked by two disulfide bonds.

The protein resides in the secreted. Functionally, insulin decreases blood glucose concentration. It increases cell permeability to monosaccharides, amino acids and fatty acids. It accelerates glycolysis, the pentose phosphate cycle, and glycogen synthesis in liver. This is Insulin (ins) from Gadus morhua subsp. callarias (Baltic cod).